The chain runs to 240 residues: Orotidine 5'-phosphate decarboxylase (240 aa).

Substrate contacts are provided by residues Asp10, Lys32, 59–68 (DLKLHDIPNT), Thr122, Arg183, Gln192, Gly212, and Arg213. The Proton donor role is filled by Lys61.

It belongs to the OMP decarboxylase family. Type 1 subfamily. As to quaternary structure, homodimer.

The catalysed reaction is orotidine 5'-phosphate + H(+) = UMP + CO2. Its pathway is pyrimidine metabolism; UMP biosynthesis via de novo pathway; UMP from orotate: step 2/2. Functionally, catalyzes the decarboxylation of orotidine 5'-monophosphate (OMP) to uridine 5'-monophosphate (UMP). In Carboxydothermus hydrogenoformans (strain ATCC BAA-161 / DSM 6008 / Z-2901), this protein is Orotidine 5'-phosphate decarboxylase.